The sequence spans 565 residues: Sulfite reductase [NADPH] hemoprotein beta-component (565 aa).

4 residues coordinate [4Fe-4S] cluster: C429, C435, C474, and C478. Residue C478 participates in siroheme binding.

The protein belongs to the nitrite and sulfite reductase 4Fe-4S domain family. Alpha(8)-beta(8). The alpha component is a flavoprotein, the beta component is a hemoprotein. Requires siroheme as cofactor. The cofactor is [4Fe-4S] cluster.

It catalyses the reaction hydrogen sulfide + 3 NADP(+) + 3 H2O = sulfite + 3 NADPH + 4 H(+). Its pathway is sulfur metabolism; hydrogen sulfide biosynthesis; hydrogen sulfide from sulfite (NADPH route): step 1/1. Its function is as follows. Component of the sulfite reductase complex that catalyzes the 6-electron reduction of sulfite to sulfide. This is one of several activities required for the biosynthesis of L-cysteine from sulfate. The sequence is that of Sulfite reductase [NADPH] hemoprotein beta-component from Shewanella oneidensis (strain ATCC 700550 / JCM 31522 / CIP 106686 / LMG 19005 / NCIMB 14063 / MR-1).